Consider the following 217-residue polypeptide: Holliday junction branch migration complex subunit RuvA (217 aa).

The tract at residues 1 to 64 (MIGKLTGILD…EDAIRLFGFE (64 aa)) is domain I. The domain II stretch occupies residues 65–145 (TKVEQDWFCL…NAPHQSMPHF (81 aa)). Positions 146-160 (VSYSSETSSQAGTQH) are flexible linker. Residues 161-217 (TGHQHSMDALAALTKLGFERDQATHALQEAIKAFEGETPSSALLIRHSLKLLSSHLK) form a domain III region.

This sequence belongs to the RuvA family. Homotetramer. Forms an RuvA(8)-RuvB(12)-Holliday junction (HJ) complex. HJ DNA is sandwiched between 2 RuvA tetramers; dsDNA enters through RuvA and exits via RuvB. An RuvB hexamer assembles on each DNA strand where it exits the tetramer. Each RuvB hexamer is contacted by two RuvA subunits (via domain III) on 2 adjacent RuvB subunits; this complex drives branch migration. In the full resolvosome a probable DNA-RuvA(4)-RuvB(12)-RuvC(2) complex forms which resolves the HJ.

It localises to the cytoplasm. Its function is as follows. The RuvA-RuvB-RuvC complex processes Holliday junction (HJ) DNA during genetic recombination and DNA repair, while the RuvA-RuvB complex plays an important role in the rescue of blocked DNA replication forks via replication fork reversal (RFR). RuvA specifically binds to HJ cruciform DNA, conferring on it an open structure. The RuvB hexamer acts as an ATP-dependent pump, pulling dsDNA into and through the RuvAB complex. HJ branch migration allows RuvC to scan DNA until it finds its consensus sequence, where it cleaves and resolves the cruciform DNA. This Bartonella bacilliformis (strain ATCC 35685 / KC583 / Herrer 020/F12,63) protein is Holliday junction branch migration complex subunit RuvA.